Consider the following 1391-residue polypeptide: DNA-directed RNA polymerase subunit beta' (1391 aa).

Positions 72, 74, 87, and 90 each coordinate Zn(2+). Mg(2+) is bound by residues aspartate 462, aspartate 464, and aspartate 466. Cysteine 816, cysteine 890, cysteine 897, and cysteine 900 together coordinate Zn(2+).

It belongs to the RNA polymerase beta' chain family. As to quaternary structure, the RNAP catalytic core consists of 2 alpha, 1 beta, 1 beta' and 1 omega subunit. When a sigma factor is associated with the core the holoenzyme is formed, which can initiate transcription. It depends on Mg(2+) as a cofactor. Requires Zn(2+) as cofactor.

The enzyme catalyses RNA(n) + a ribonucleoside 5'-triphosphate = RNA(n+1) + diphosphate. Its function is as follows. DNA-dependent RNA polymerase catalyzes the transcription of DNA into RNA using the four ribonucleoside triphosphates as substrates. This is DNA-directed RNA polymerase subunit beta' from Neisseria meningitidis serogroup C / serotype 2a (strain ATCC 700532 / DSM 15464 / FAM18).